A 312-amino-acid chain; its full sequence is Taste receptor type 2 member 7 (312 aa).

Residues 1 to 9 are Extracellular-facing; that stretch reads MTYETDTTL. The helical transmembrane segment at 10-30 threads the bilayer; that stretch reads MFVAVCEALVGILGNAFIALV. At 31–49 the chain is on the cytoplasmic side; the sequence is NFMGWMKNRKITAIDLILS. A helical membrane pass occupies residues 50 to 70; it reads SLAMSRICLQCIILLDCIILV. At 71–101 the chain is on the extracellular side; it reads QYPDTYNRGKEMRIIDFFWTLTNHLSVWFAT. The chain crosses the membrane as a helical span at residues 102–122; it reads CLSIFYFFKIANFFHPLFLWI. The Cytoplasmic portion of the chain corresponds to 123–128; that stretch reads KWRIDK. Residues 129 to 149 form a helical membrane-spanning segment; the sequence is LILRTLLACLILSLCFSLPVT. Residues 150-187 are Extracellular-facing; it reads ENLTDDFRRCVKTKERINSTLRCKLNKAGYASVKVNLN. 2 N-linked (GlcNAc...) asparagine glycosylation sites follow: Asn-151 and Asn-167. A helical membrane pass occupies residues 188 to 208; it reads LVMLFPFSVSLVSFLLLILSL. The Cytoplasmic portion of the chain corresponds to 209-235; that stretch reads WRHTRQMQLNVTGYNDPSTTAHVKATK. Residues 236 to 256 form a helical membrane-spanning segment; that stretch reads AVISFLVLFIVYCLAFLIATS. Topologically, residues 257–266 are extracellular; sequence SYFMPESELA. A helical membrane pass occupies residues 267–287; sequence VIWGELIALIYPSSHSFILIL. Over 288–312 the chain is Cytoplasmic; the sequence is GNSKLKQASVRVLCRVKTMLKGRKY.

Belongs to the G-protein coupled receptor T2R family. As to expression, expressed in subsets of taste receptor cells of the tongue and palate epithelium and exclusively in gustducin-positive cells. Expressed in 15% taste bud cells in circumvallate and foliate papillae but only in 2% in fungiform papillae. Expressed in the duodenum, antrum and fundus (part of the stomach) and in gastric endocrine cells.

The protein resides in the membrane. In terms of biological role, gustducin-coupled receptor implicated in the perception of bitter compounds in the oral cavity and the gastrointestinal tract. Signals through PLCB2 and the calcium-regulated cation channel TRPM5. The polypeptide is Taste receptor type 2 member 7 (Tas2r7) (Rattus norvegicus (Rat)).